The sequence spans 98 residues: MPFIYINILLALTTALLGLLLFRSHMMSSLLCLEGLMLSLFIMSALTTLGTHHTLSITMPIILMVFAACETALGLALLVTISNIYGSDYVQNLNLLQC.

Transmembrane regions (helical) follow at residues 2 to 22, 30 to 50, and 61 to 81; these read PFIYINILLALTTALLGLLLF, LLCLEGLMLSLFIMSALTTLG, and IILMVFAACETALGLALLVTI.

Belongs to the complex I subunit 4L family. In terms of assembly, core subunit of respiratory chain NADH dehydrogenase (Complex I) which is composed of 45 different subunits.

The protein localises to the mitochondrion inner membrane. It carries out the reaction a ubiquinone + NADH + 5 H(+)(in) = a ubiquinol + NAD(+) + 4 H(+)(out). Functionally, core subunit of the mitochondrial membrane respiratory chain NADH dehydrogenase (Complex I) which catalyzes electron transfer from NADH through the respiratory chain, using ubiquinone as an electron acceptor. Part of the enzyme membrane arm which is embedded in the lipid bilayer and involved in proton translocation. This chain is NADH-ubiquinone oxidoreductase chain 4L (MT-ND4L), found in Bradypus tridactylus (Pale-throated three-toed sloth).